The primary structure comprises 370 residues: MGLEEDIESLEEEIANTPYNKSTEAHIGRLKAKLAEQKEKLEAQQSGSGGGGGYAVEQHGDATVALVGFPSVGKSSLINAMTNADSEVGAYEFTTLNVNPGMLEYRGANIQLLDVPGLIEGAAGGRGGGKEILSVIRGADLVIFVLSAFEIEQYDRLAEELYNVNIRVDAEPPSVTVRRKGKDGIDVNTSGELELDSDTVKGILRERGFINANVTIRGNPSVDRLIDGVMDNRVYMPSLVTVNKVDLIEPSYAGTMKDALRDHGVSPDDAIFISAAEEKGLDVLKERMWRALGLIRIYMDKPGRGVDREEPLIIRRGETVDDAVQKLGGTLDERFRFARVTGPSAQHDDQQVGRDHVLEDEDVLRVVARR.

Positions 62–293 constitute an OBG-type G domain; the sequence is ATVALVGFPS…LKERMWRALG (232 aa). Residues 68–75, 114–118, and 243–246 each bind GTP; these read GFPSVGKS, DVPGL, and NKVD. One can recognise a TGS domain in the interval 293-368; the sequence is GLIRIYMDKP…EDEDVLRVVA (76 aa).

Belongs to the TRAFAC class OBG-HflX-like GTPase superfamily. OBG GTPase family.

This is an uncharacterized protein from Halobacterium salinarum (strain ATCC 700922 / JCM 11081 / NRC-1) (Halobacterium halobium).